We begin with the raw amino-acid sequence, 81 residues long: MKQGIHPNYNKVVFMDSTTEYKFLTGSTRSSNETITWEDGNEYPLIRVDVSSDSHPFYTGRQKFNAADGRVDRFNKKYGRK.

The protein belongs to the bacterial ribosomal protein bL31 family. Type B subfamily. Part of the 50S ribosomal subunit.

The sequence is that of Large ribosomal subunit protein bL31B from Exiguobacterium sibiricum (strain DSM 17290 / CCUG 55495 / CIP 109462 / JCM 13490 / 255-15).